We begin with the raw amino-acid sequence, 222 residues long: uncharacterized protein (222 aa).

Helical transmembrane passes span 23–43, 67–87, 157–177, and 187–207; these read FFAA…TGLL, IWVL…IGYL, IVGG…LGNV, and IILG…WHGY.

Belongs to the DedA family.

The protein resides in the cell membrane. This is an uncharacterized protein from Mycobacterium leprae (strain TN).